The chain runs to 187 residues: Ribosome-recycling factor (187 aa).

The protein belongs to the RRF family.

It localises to the cytoplasm. Its function is as follows. Responsible for the release of ribosomes from messenger RNA at the termination of protein biosynthesis. May increase the efficiency of translation by recycling ribosomes from one round of translation to another. This is Ribosome-recycling factor from Paracoccus zeaxanthinifaciens.